A 593-amino-acid chain; its full sequence is Polyphenol oxidase, chloroplastic (593 aa).

Residues Met1 to Thr13 are compositionally biased toward low complexity. A disordered region spans residues Met1 to Leu34. The transit peptide at Met1–Ala89 directs the protein to the chloroplast. Polar residues predominate over residues Pro24–Leu34. 2 disulfides stabilise this stretch: Cys100-Cys115 and Cys114-Cys176. 6 residues coordinate Cu cation: His175, His196, His205, His327, His331, and His361. The segment at residues Cys179–His196 is a cross-link (2'-(S-cysteinyl)-histidine (Cys-His)).

It belongs to the tyrosinase family. Cu(2+) serves as cofactor.

The protein resides in the plastid. The protein localises to the chloroplast thylakoid lumen. The enzyme catalyses 2 catechol + O2 = 2 1,2-benzoquinone + 2 H2O. Its function is as follows. Catalyzes the oxidation of mono- and o-diphenols to o-diquinones. This is Polyphenol oxidase, chloroplastic from Malus domestica (Apple).